Reading from the N-terminus, the 173-residue chain is Interferon gamma (173 aa).

An N-terminal signal peptide occupies residues 1–22 (MNATHCILALQLCLLAISGCSS). Gln-23 carries the pyrrolidone carboxylic acid modification. 2 N-linked (GlcNAc...) asparagine glycosylation sites follow: Asn-38 and Asn-105.

Belongs to the type II (or gamma) interferon family. Homodimer. Interacts with IFNGR1 (via extracellular domain); this interaction promotes IFNGR1 dimerization. Released primarily from activated T lymphocytes.

Its subcellular location is the secreted. Functionally, type II interferon produced by immune cells such as T-cells and NK cells that plays crucial roles in antimicrobial, antiviral, and antitumor responses by activating effector immune cells and enhancing antigen presentation. Primarily signals through the JAK-STAT pathway after interaction with its receptor IFNGR1 to affect gene regulation. Upon IFNG binding, IFNGR1 intracellular domain opens out to allow association of downstream signaling components JAK2, JAK1 and STAT1, leading to STAT1 activation, nuclear translocation and transcription of IFNG-regulated genes. Many of the induced genes are transcription factors such as IRF1 that are able to further drive regulation of a next wave of transcription. Plays a role in class I antigen presentation pathway by inducing a replacement of catalytic proteasome subunits with immunoproteasome subunits. In turn, increases the quantity, quality, and repertoire of peptides for class I MHC loading. Increases the efficiency of peptide generation also by inducing the expression of activator PA28 that associates with the proteasome and alters its proteolytic cleavage preference. Up-regulates as well MHC II complexes on the cell surface by promoting expression of several key molecules such as cathepsins B/CTSB, H/CTSH, and L/CTSL. Participates in the regulation of hematopoietic stem cells during development and under homeostatic conditions by affecting their development, quiescence, and differentiation. This is Interferon gamma (IFNG) from Meriones unguiculatus (Mongolian jird).